A 370-amino-acid polypeptide reads, in one-letter code: Ni-sirohydrochlorin a,c-diamide reductive cyclase complex, component CfbD (370 aa).

The protein belongs to the NifD/NifK/NifE/NifN family. As to quaternary structure, homodimer or monomer. The Ni-sirohydrochlorin a,c-diamide reductive cyclase complex is composed of a NifH homolog component CfbC and a NifD homolog component CfbD. The cofactor is [4Fe-4S] cluster.

It catalyses the reaction Ni-sirohydrochlorin a,c-diamide + 3 AH2 + ATP + H2O = 15,17(3)-seco-F430-17(3)-acid + 3 A + ADP + phosphate. Functionally, involved in the biosynthesis of the unique nickel-containing tetrapyrrole coenzyme F430, the prosthetic group of methyl-coenzyme M reductase (MCR), which plays a key role in methanogenesis and anaerobic methane oxidation. Catalyzes both the six-electron reduction of the tetrahydroporphyrin ring system and the gamma-lactamization of the c-acetamide side chain of Ni-sirohydrochlorin a,c-diamide to yield 15,17(3)-seco-F430-17(3)-acid (seco-F430), the last intermediate in the biosynthesis of the coenzyme F430. This chain is Ni-sirohydrochlorin a,c-diamide reductive cyclase complex, component CfbD, found in Methanosarcina acetivorans (strain ATCC 35395 / DSM 2834 / JCM 12185 / C2A).